Consider the following 303-residue polypeptide: Protoheme IX farnesyltransferase (303 aa).

The next 9 membrane-spanning stretches (helical) occupy residues Met25 to Met45, Ile54 to Leu74, Leu104 to Ile124, Pro125 to Ser145, Trp151 to Ile171, Ala179 to Ile199, Phe227 to Phe247, Val248 to Lys268, and Phe280 to Leu300.

The protein belongs to the UbiA prenyltransferase family. Protoheme IX farnesyltransferase subfamily. Interacts with CtaA.

It localises to the cell membrane. It catalyses the reaction heme b + (2E,6E)-farnesyl diphosphate + H2O = Fe(II)-heme o + diphosphate. Its pathway is porphyrin-containing compound metabolism; heme O biosynthesis; heme O from protoheme: step 1/1. Functionally, converts heme B (protoheme IX) to heme O by substitution of the vinyl group on carbon 2 of heme B porphyrin ring with a hydroxyethyl farnesyl side group. The polypeptide is Protoheme IX farnesyltransferase (Staphylococcus aureus (strain bovine RF122 / ET3-1)).